We begin with the raw amino-acid sequence, 156 residues long: Snaclec trimecetin subunit alpha (156 aa).

Residues Met1–Ala23 form the signal peptide. Disulfide bonds link Cys25/Cys36, Cys53/Cys150, and Cys125/Cys142. A C-type lectin domain is found at Phe32 to Lys151.

This sequence belongs to the snaclec family. Heterodimer of subunits alpha and beta; disulfide-linked. Expressed by the venom gland.

It is found in the secreted. Functionally, snaclec that induces platelet aggregation in either human platelet rich plasma (PRP) or washed platelet suspensions. It causes aggregation in a dose-dependent manner even in the absence of various platelet agonists such as ADP or von Willebrand factor (vWF). Interestingly, it does not induce aggregation in rabbit PRP. A monoclonal antibody against the platelet GPIb receptor blocks the aggregation induced by trimecetin, suggesting that it acts by binding to GPIb (GP1BA/GP1BB). The sequence is that of Snaclec trimecetin subunit alpha from Protobothrops mucrosquamatus (Taiwan habu).